We begin with the raw amino-acid sequence, 69 residues long: Large ribosomal subunit protein uL29 (69 aa).

The protein belongs to the universal ribosomal protein uL29 family.

The protein is Large ribosomal subunit protein uL29 of Lachnoclostridium phytofermentans (strain ATCC 700394 / DSM 18823 / ISDg) (Clostridium phytofermentans).